The chain runs to 113 residues: uncharacterized protein (113 aa).

The protein localises to the cytoplasm. It is found in the nucleus. This is an uncharacterized protein from Saccharomyces cerevisiae (strain ATCC 204508 / S288c) (Baker's yeast).